Here is a 506-residue protein sequence, read N- to C-terminus: ATP-dependent rRNA helicase RRP3 (506 aa).

2 disordered regions span residues 1 to 22 (MSGK…KSKE) and 37 to 88 (NQKK…FESF). A compositionally biased stretch (acidic residues) spans 49–69 (SDQEDDPSESEEEEGSDSEDV). The Q motif signature appears at 86–114 (ESFSDLDLVPELIEACKNLNFAKPTPIQA). One can recognise a Helicase ATP-binding domain in the interval 117 to 289 (IPPALQGHDI…RASLTNPVKC (173 aa)). ATP is bound at residue 130–137 (AQTGSGKT). The DEAD box motif lies at 236–239 (DEAD). Positions 312-460 (LKNTYLIYLM…KENVNKDAIL (149 aa)) constitute a Helicase C-terminal domain. The interval 485–506 (IARGKGRRGRMAARDDMDKGER) is disordered. Residues 496–506 (AARDDMDKGER) are compositionally biased toward basic and acidic residues.

The protein belongs to the DEAD box helicase family. DDX47/RRP3 subfamily. As to quaternary structure, interacts with the SSU processome.

The protein localises to the nucleus. The catalysed reaction is ATP + H2O = ADP + phosphate + H(+). ATP-dependent rRNA helicase required for pre-ribosomal RNA processing. Involved in the maturation of the 35S-pre-rRNA and to its cleavage to mature 18S rRNA. This chain is ATP-dependent rRNA helicase RRP3, found in Vanderwaltozyma polyspora (strain ATCC 22028 / DSM 70294 / BCRC 21397 / CBS 2163 / NBRC 10782 / NRRL Y-8283 / UCD 57-17) (Kluyveromyces polysporus).